The chain runs to 351 residues: Caveolin-2 (351 aa).

Residues 1–14 (MTRQNTSESDNTQR) show a composition bias toward polar residues. 3 disordered regions span residues 1 to 55 (MTRQ…QGIA), 71 to 93 (HRTS…YDNL), and 144 to 193 (QKGS…PEME). At 1–261 (MTRQNTSESD…FEIVRIYSYK (261 aa)) the chain is on the cytoplasmic side. Positions 22-31 (TVDDIDELTD) are enriched in acidic residues. A compositionally biased stretch (basic residues) spans 38 to 51 (HHHHHHHHEHHHQH). Positions 167-184 (PAQQSAPPTQQSRPQTTS) are enriched in low complexity. Positions 262-290 (ILTLIFGLIIAFLGGILFALFAFLNIWIF) form an intramembrane region, helical. Topologically, residues 291-351 (RPILILTRMA…EVWEKHIHHV (61 aa)) are cytoplasmic.

The protein belongs to the caveolin family. In terms of assembly, homooligomer. As to expression, expressed in intracellular bodies in intestinal cells.

Its subcellular location is the golgi apparatus membrane. It localises to the cell membrane. It is found in the membrane. The protein resides in the caveola. The protein localises to the apical cell membrane. May act as a scaffolding protein within caveolar membranes. Interacts directly with G-protein alpha subunits and can regulate their activity. Thought to have a role in the uptake of lipids and proteins in the intestinal cells; operates in the apical uptake of lipid markers and trafficking of yolk proteins. Affects fecundity and egg laying. This is Caveolin-2 (cav-2) from Caenorhabditis elegans.